We begin with the raw amino-acid sequence, 394 residues long: Ceramide glucosyltransferase (394 aa).

Topologically, residues 1–10 are lumenal; it reads MALLDLAQEG. A helical membrane pass occupies residues 11–32; the sequence is MALFGFVLFVVLWLMHFMSIIY. Residues 33–195 lie on the Cytoplasmic side of the membrane; that stretch reads TRLHLNKKAT…QVYFGTSHPR (163 aa). A short sequence motif (D1) is located at residue Asp92. Lys117 is subject to N6-acetyllysine. Position 144 (Asp144) is a short sequence motif, D2. A helical transmembrane segment spans residues 196–215; the sequence is SYISANVTGFKCVTGMSCLM. At 216–287 the chain is on the lumenal side; it reads RKDVLDQAGG…KLRINMLPAT (72 aa). A short sequence motif (D3) is located at residue Asp236. Asp236 acts as the Proton acceptor in catalysis. Positions 272 to 276 match the (Q/R)XXRW motif; that stretch reads RMIRW. A helical transmembrane segment spans residues 288 to 304; the sequence is IICEPISECFVASLIIG. Residues 305-309 lie on the Cytoplasmic side of the membrane; the sequence is WAAHH. A helical membrane pass occupies residues 310-328; that stretch reads VFRWDIMVFFMCHCLAWFI. The Lumenal segment spans residues 329–348; it reads FDYIQLRGVQGGTLCFSKLD. The helical transmembrane segment at 349-369 threads the bilayer; sequence YAVAWFIRESMTIYIFLSALW. The Cytoplasmic segment spans residues 370–394; that stretch reads DPTISWRTGRYRLRCGGTAEEILDV.

The protein belongs to the glycosyltransferase 2 family. In terms of assembly, interacts with RTN1; regulates the ceramide glucosyltransferase activity of UGCG.

It is found in the golgi apparatus membrane. It catalyses the reaction an N-acylsphing-4-enine + UDP-alpha-D-glucose = a beta-D-glucosyl-(1&lt;-&gt;1')-N-acylsphing-4-enine + UDP + H(+). It carries out the reaction UDP-alpha-D-xylose + an N-acylsphing-4-enine = a beta-D-xylosyl-(1&lt;-&gt;1')-N-acylsphing-4-enine + UDP + H(+). The catalysed reaction is N-(9Z-octadecenoyl)-sphing-4-enine + UDP-alpha-D-xylose = beta-D-xylosyl-(1&lt;-&gt;1')-N-(9Z-octadecenoyl)-sphing-4-enine + UDP + H(+). It functions in the pathway lipid metabolism; sphingolipid metabolism. In terms of biological role, participates in the initial step of the glucosylceramide-based glycosphingolipid/GSL synthetic pathway at the cytosolic surface of the Golgi. Catalyzes the transfer of glucose from UDP-glucose to ceramide to produce glucosylceramide/GlcCer (such as beta-D-glucosyl-(1&lt;-&gt;1')-N-acylsphing-4-enine). Glucosylceramide is the core component of glycosphingolipids/GSLs, amphipathic molecules consisting of a ceramide lipid moiety embedded in the outer leaflet of the membrane, linked to one of hundreds of different externally oriented oligosaccharide structures. Glycosphingolipids are essential components of membrane microdomains that mediate membrane trafficking and signal transduction. They are implicated in many fundamental cellular processes, including growth, differentiation, migration, morphogenesis, cell-to-cell and cell-to-matrix interactions. They are required for instance in the proper development and functioning of the nervous system. As an example of their role in signal transduction, they regulate the leptin receptor/LEPR in the leptin-mediated signaling pathway. They also play an important role in the establishment of the skin barrier regulating keratinocyte differentiation and the proper assembly of the cornified envelope. The biosynthesis of GSLs is also required for the proper intestinal endocytic uptake of nutritional lipids. Catalyzes the synthesis of xylosylceramide/XylCer (such as beta-D-xylosyl-(1&lt;-&gt;1')-N-acylsphing-4-enine) using UDP-Xyl as xylose donor. The sequence is that of Ceramide glucosyltransferase from Mus musculus (Mouse).